Reading from the N-terminus, the 209-residue chain is Ribosomal RNA large subunit methyltransferase E (209 aa).

S-adenosyl-L-methionine-binding residues include glycine 63, tryptophan 65, aspartate 83, aspartate 99, and aspartate 124. Lysine 164 functions as the Proton acceptor in the catalytic mechanism. Residues 191-209 (EASRGRSREVYIVATGYKG) form the TRAM domain.

Belongs to the class I-like SAM-binding methyltransferase superfamily. RNA methyltransferase RlmE family.

It localises to the cytoplasm. It catalyses the reaction uridine(2552) in 23S rRNA + S-adenosyl-L-methionine = 2'-O-methyluridine(2552) in 23S rRNA + S-adenosyl-L-homocysteine + H(+). Functionally, specifically methylates the uridine in position 2552 of 23S rRNA at the 2'-O position of the ribose in the fully assembled 50S ribosomal subunit. This Haemophilus influenzae (strain 86-028NP) protein is Ribosomal RNA large subunit methyltransferase E.